We begin with the raw amino-acid sequence, 234 residues long: UPF0173 metal-dependent hydrolase RL2074 (234 aa).

Belongs to the UPF0173 family.

This Rhizobium johnstonii (strain DSM 114642 / LMG 32736 / 3841) (Rhizobium leguminosarum bv. viciae) protein is UPF0173 metal-dependent hydrolase RL2074.